Here is a 186-residue protein sequence, read N- to C-terminus: Riboflavin kinase (186 aa).

The Mg(2+) site is built by threonine 42 and asparagine 44. The active-site Nucleophile is the glutamate 123.

Belongs to the flavokinase family. The cofactor is Zn(2+). Requires Mg(2+) as cofactor.

It catalyses the reaction riboflavin + ATP = FMN + ADP + H(+). The protein operates within cofactor biosynthesis; FMN biosynthesis; FMN from riboflavin (ATP route): step 1/1. In terms of biological role, catalyzes the phosphorylation of riboflavin (vitamin B2) to form flavin mononucleotide (FMN) coenzyme. This chain is Riboflavin kinase (FMN1), found in Eremothecium gossypii (strain ATCC 10895 / CBS 109.51 / FGSC 9923 / NRRL Y-1056) (Yeast).